The sequence spans 446 residues: MEPIHIIGAGLAGSEAAWQIARAGVPVVLHEMRPQVATFAHRTGDCAEMVCSNSFRSDDDRMNAVGQLHWEMRAAGGLIMAMADRHRLPAGGALAVDRDAFSQAVTQALQAEPLVSFQPGEISDLPSEGHWIVATGPLTSEALGRSIRSLTGEGSLAFFDAIAPIVHAESIDMSICWRQSRYDKGETEEERTAYINCPMTREDYEGFIDALLAADKTEFHEGETAGYFDGCLPIEVMAERGRETLRHGPMKPVGLTNAHNPAEKPYAVVQLRRDNALGTLYNIVGFQTKMKYGAQVDVFRRIPGLQDASFARLGGIHRNTFLNSPRLIDDRLRLRARPHLRFAGQVTGVEGYVESAAMGLLAGRMAAAEALGRDLPPPPATTSMGALVSHITGGADAKTFQPMNVNFGLYPPLDAMRGGRKGRKDRYPAYTDRAKADFQQWVAGES.

8 to 13 provides a ligand contact to FAD; sequence GAGLAG.

Belongs to the MnmG family. TrmFO subfamily. It depends on FAD as a cofactor.

It localises to the cytoplasm. It carries out the reaction uridine(54) in tRNA + (6R)-5,10-methylene-5,6,7,8-tetrahydrofolate + NADH + H(+) = 5-methyluridine(54) in tRNA + (6S)-5,6,7,8-tetrahydrofolate + NAD(+). The catalysed reaction is uridine(54) in tRNA + (6R)-5,10-methylene-5,6,7,8-tetrahydrofolate + NADPH + H(+) = 5-methyluridine(54) in tRNA + (6S)-5,6,7,8-tetrahydrofolate + NADP(+). Catalyzes the folate-dependent formation of 5-methyl-uridine at position 54 (M-5-U54) in all tRNAs. In Paracoccus denitrificans (strain Pd 1222), this protein is Methylenetetrahydrofolate--tRNA-(uracil-5-)-methyltransferase TrmFO.